An 84-amino-acid polypeptide reads, in one-letter code: Small ribosomal subunit protein uS17 (84 aa).

This sequence belongs to the universal ribosomal protein uS17 family. As to quaternary structure, part of the 30S ribosomal subunit.

Its function is as follows. One of the primary rRNA binding proteins, it binds specifically to the 5'-end of 16S ribosomal RNA. This chain is Small ribosomal subunit protein uS17, found in Klebsiella pneumoniae subsp. pneumoniae (strain ATCC 700721 / MGH 78578).